A 234-amino-acid polypeptide reads, in one-letter code: Proteasome subunit alpha type-2 (234 aa).

N-acetylalanine is present on alanine 2. The residue at position 6 (tyrosine 6) is a Phosphotyrosine. Residues serine 7, serine 14, and serine 16 each carry the phosphoserine modification. Tyrosine 24 carries the post-translational modification Phosphotyrosine. Lysine 70 bears the N6-acetyllysine mark. Phosphotyrosine occurs at positions 76 and 121. An N6-acetyllysine modification is found at lysine 171.

It belongs to the peptidase T1A family. In terms of assembly, the 26S proteasome consists of a 20S proteasome core and two 19S regulatory subunits. The 20S proteasome core is a barrel-shaped complex made of 28 subunits that are arranged in four stacked rings. The two outer rings are each formed by seven alpha subunits, and the two inner rings are formed by seven beta subunits. The proteolytic activity is exerted by three beta-subunits PSMB5, PSMB6 and PSMB7. Post-translationally, phosphorylated on tyrosine residues; which may be important for nuclear import. Detected in liver (at protein level).

Its subcellular location is the cytoplasm. The protein resides in the nucleus. Its function is as follows. Component of the 20S core proteasome complex involved in the proteolytic degradation of most intracellular proteins. This complex plays numerous essential roles within the cell by associating with different regulatory particles. Associated with two 19S regulatory particles, forms the 26S proteasome and thus participates in the ATP-dependent degradation of ubiquitinated proteins. The 26S proteasome plays a key role in the maintenance of protein homeostasis by removing misfolded or damaged proteins that could impair cellular functions, and by removing proteins whose functions are no longer required. Associated with the PA200 or PA28, the 20S proteasome mediates ubiquitin-independent protein degradation. This type of proteolysis is required in several pathways including spermatogenesis (20S-PA200 complex) or generation of a subset of MHC class I-presented antigenic peptides (20S-PA28 complex). This Mus musculus (Mouse) protein is Proteasome subunit alpha type-2 (Psma2).